A 266-amino-acid polypeptide reads, in one-letter code: HLA class II histocompatibility antigen, DR beta 3 chain (266 aa).

A signal peptide spans 1–29 (MVCLKLPGGSSLAALTVTLMVLSSRLAFA). Positions 30-124 (GDTRPRFLEL…GESFTVQRRV (95 aa)) are beta-1. Topologically, residues 30-227 (GDTRPRFLEL…RARSESAQSK (198 aa)) are extracellular. Cystine bridges form between Cys44–Cys108 and Cys146–Cys202. A glycan (N-linked (GlcNAc...) asparagine) is linked at Asn48. A beta-2 region spans residues 125-227 (HPQVTVYPAK…RARSESAQSK (103 aa)). Residues 126–214 (PQVTVYPAKT…EHPSVTSALT (89 aa)) enclose the Ig-like C1-type domain. The chain crosses the membrane as a helical span at residues 228–248 (MLSGVGGFVLGLLFLGAGLFI). Topologically, residues 249–266 (YFRNQKGHSGLQPTGFLS) are cytoplasmic.

This sequence belongs to the MHC class II family. In terms of assembly, heterotrimer that consists of an alpha chain HLA-DRA, a beta chain HLA-DRB1 and a peptide (peptide-MHCII). Newly synthesized alpha and beta chains forms a heterodimer (MHCII) that associates with the CD74/invariant chain (Ii) in the endoplasmic reticulum (ER). Ii is a trimer composed of three subunits and each subunit interacts with one MHCII dimer, blocking the peptide-binding cleft. As a result, MHCII molecules cannot bind peptides present in the ER. The complex of MHCII and CD74/Ii is transported in vesicles from ER to Golgi to lysosomes, where it encounters antigenic peptides generated via proteolysis of endocytosed antigens. MHCII dimers are dissociated from CD74/Ii by the combined action of proteolysis and HLA-DM. Lysosomal enzymes such as cathepsin, degrade CD74/Ii leaving a 24 amino acid remnant called class II-associated Ii or CLIP. Interacts (via the peptide binding cleft) with CLIP; this interaction inhibits antigen peptide binding before entry in the endosomal compartment. The displacement of CLIP and replacement by a high affinity peptide in lysosomes is performed by HLA-DM heterodimer. HLA-DM catalyzes CLIP dissociation from MHCII, stabilizes empty MHCII and mediates the selection of high affinity peptides. Interacts with HLA-DM heterodimer; this interaction is direct. Interacts with TCR (via CDR3). Interacts (via beta-2 domain) with CD4 coreceptor (via Ig-like V-type domain); this interaction is of exceptionally low affinity yet necessary for optimal recognition of antigenic peptides. Post-translationally, ubiquitinated by MARCHF1 and MARCHF8 at Lys-254 leading to sorting into the endosome system and down-regulation of MHC class II. As to expression, expressed in professional APCs: monocyte/macrophages, dendritic cells and B cells (at protein level).

The protein resides in the cell membrane. It is found in the endoplasmic reticulum membrane. The protein localises to the lysosome membrane. It localises to the late endosome membrane. Its subcellular location is the autolysosome membrane. In terms of biological role, a beta chain of antigen-presenting major histocompatibility complex class II (MHCII) molecule. In complex with the alpha chain HLA-DRA, displays antigenic peptides on professional antigen presenting cells (APCs) for recognition by alpha-beta T cell receptor (TCR) on HLA-DRB3-restricted CD4-positive T cells. This guides antigen-specific T-helper effector functions, both antibody-mediated immune response and macrophage activation, to ultimately eliminate the infectious agents and transformed cells. Typically presents extracellular peptide antigens of 10 to 30 amino acids that arise from proteolysis of endocytosed antigens in lysosomes. In the tumor microenvironment, presents antigenic peptides that are primarily generated in tumor-resident APCs likely via phagocytosis of apoptotic tumor cells or macropinocytosis of secreted tumor proteins. Presents peptides derived from intracellular proteins that are trapped in autolysosomes after macroautophagy, a mechanism especially relevant for T cell selection in the thymus and central immune tolerance. The selection of the immunodominant epitopes follows two processing modes: 'bind first, cut/trim later' for pathogen-derived antigenic peptides and 'cut first, bind later' for autoantigens/self-peptides. The anchor residue at position 1 of the peptide N-terminus, usually a large hydrophobic residue, is essential for high affinity interaction with MHCII molecules. Functionally, ALLELE DRB3*01:01: Exclusively presents several immunogenic epitopes derived from C.tetani neurotoxin tetX, playing a significant role in immune recognition and long-term protection. Presents viral epitopes derived from HHV-6B U11, TRX2/U56 and U85 antigens to polyfunctional CD4-positive T cells with cytotoxic activity implicated in control of HHV-6B infection. Its function is as follows. ALLELE DRB3*02:02 Exclusively presents several immunogenic epitopes derived from C.tetani neurotoxin tetX, playing a significant role in immune recognition and long-term protection. Upon EBV infection, presents to CD4-positive T cells latent antigen EBNA2 (PRSPTVFYNIPPMPLPPSQL) and lytic antigen BZLF1 (LTAYHVSTAPTGSWF) peptides, driving oligoclonal expansion and selection of virus-specific memory T cell subsets with cytotoxic potential to directly eliminate virus-infected B cells. Presents viral epitopes derived from HHV-6B U11, gB/U39 and gH/U48 antigens to polyfunctional CD4-positive T cells with cytotoxic activity implicated in control of HHV-6B infection. Plays a minor role in CD4-positive T cell immune response against Dengue virus by presenting conserved peptides from capsid and non-structural NS3 proteins. Displays peptides derived from IAV matrix protein M, implying a role in protection against IAV infection. In the context of tumor immunesurveillance, may present to T-helper 1 cells an immunogenic epitope derived from tumor-associated antigen WT1 (KRYFKLSHLQMHSRKH), likely providing for effective antitumor immunity in a wide range of solid and hematological malignancies. Presents to Vbeta2-positive T-helper 1 cells specifically an immunodominant peptide derived from tumor antigen CTAG1A/NY-ESO-1(PGVLLKEFTVSGNILTIRLTAADHR) and confers protective memory response. In metastatic epithelial tumors, presents to intratumoral CD4-positive T cells a TP53 neoantigen (HYNYMCNSSCMGSMNRRPILTIITL) carrying G245S hotspot driver mutation and may mediate tumor regression. ALLELE DRB3*03:01: Presents a series of conserved peptides derived from the M.tuberculosis PPE family of proteins, in particular PPE29 and PPE33, known to be highly immunogenic. Presents immunogenic epitopes derived from C.tetani neurotoxin tetX, playing a role in immune recognition and long-term protection. Displays immunodominant viral peptides from HCV non-structural protein NS2, as part of a broad range T-helper response to resolve infection. In Homo sapiens (Human), this protein is HLA class II histocompatibility antigen, DR beta 3 chain (HLA-DRB3).